The chain runs to 562 residues: Potassium-transporting ATPase potassium-binding subunit (562 aa).

12 helical membrane passes run 6-26 (FLLIASFMLVLLVLARPLGSF), 63-83 (ALAILLFNILGIALLFALLMM), 132-152 (GLTVQNFLSAATGIAVAFALI), 175-195 (LYVLLPIALIIALIFVSQGVL), 253-273 (FVQMLAIFLIPCALCFAFGQV), 283-303 (LIWAMSLIFVVAVVVVMYAEL), 327-347 (FGILATSMYAVVTTAASCGAV), 356-376 (ALGGMVPMWLMQIGEVVFGGV), 379-399 (GLYGMLLFVLLTVFIAGLMIG), 416-436 (MTALAILVTPAVVLLGTALAL), 483-503 (LLLAAAMFLGRFGVILPVLAI), and 526-546 (LFIGLLVGTVLLVGALTFIPA).

It belongs to the KdpA family. The system is composed of three essential subunits: KdpA, KdpB and KdpC.

It localises to the cell inner membrane. Its function is as follows. Part of the high-affinity ATP-driven potassium transport (or Kdp) system, which catalyzes the hydrolysis of ATP coupled with the electrogenic transport of potassium into the cytoplasm. This subunit binds the periplasmic potassium ions and delivers the ions to the membrane domain of KdpB through an intramembrane tunnel. This is Potassium-transporting ATPase potassium-binding subunit from Yersinia enterocolitica serotype O:8 / biotype 1B (strain NCTC 13174 / 8081).